Consider the following 462-residue polypeptide: Bifunctional protein GlmU (462 aa).

Residues 1–235 form a pyrophosphorylase region; sequence MSYINFSAII…TFEIMGVNSK (235 aa). UDP-N-acetyl-alpha-D-glucosamine-binding positions include 11-14, K25, Q80, 85-86, 107-109, G144, E159, and N233; these read LAAG, GT, and YGD. D109 is a binding site for Mg(2+). N233 lines the Mg(2+) pocket. The segment at 236–256 is linker; sequence SDFVDLDKQYQQRKVQCLLSS. The tract at residues 257 to 462 is N-acetyltransferase; it reads GLMIIDPNRF…LNWKRLKNKK (206 aa). UDP-N-acetyl-alpha-D-glucosamine is bound by residues R339 and K357. H369 functions as the Proton acceptor in the catalytic mechanism. Positions 372 and 383 each coordinate UDP-N-acetyl-alpha-D-glucosamine. Residues A386, 392–393, A429, and R446 each bind acetyl-CoA; that span reads NY.

The protein in the N-terminal section; belongs to the N-acetylglucosamine-1-phosphate uridyltransferase family. In the C-terminal section; belongs to the transferase hexapeptide repeat family. As to quaternary structure, homotrimer. It depends on Mg(2+) as a cofactor.

Its subcellular location is the cytoplasm. It catalyses the reaction alpha-D-glucosamine 1-phosphate + acetyl-CoA = N-acetyl-alpha-D-glucosamine 1-phosphate + CoA + H(+). It carries out the reaction N-acetyl-alpha-D-glucosamine 1-phosphate + UTP + H(+) = UDP-N-acetyl-alpha-D-glucosamine + diphosphate. It participates in nucleotide-sugar biosynthesis; UDP-N-acetyl-alpha-D-glucosamine biosynthesis; N-acetyl-alpha-D-glucosamine 1-phosphate from alpha-D-glucosamine 6-phosphate (route II): step 2/2. Its pathway is nucleotide-sugar biosynthesis; UDP-N-acetyl-alpha-D-glucosamine biosynthesis; UDP-N-acetyl-alpha-D-glucosamine from N-acetyl-alpha-D-glucosamine 1-phosphate: step 1/1. The protein operates within bacterial outer membrane biogenesis; LPS lipid A biosynthesis. Catalyzes the last two sequential reactions in the de novo biosynthetic pathway for UDP-N-acetylglucosamine (UDP-GlcNAc). The C-terminal domain catalyzes the transfer of acetyl group from acetyl coenzyme A to glucosamine-1-phosphate (GlcN-1-P) to produce N-acetylglucosamine-1-phosphate (GlcNAc-1-P), which is converted into UDP-GlcNAc by the transfer of uridine 5-monophosphate (from uridine 5-triphosphate), a reaction catalyzed by the N-terminal domain. The chain is Bifunctional protein GlmU from Blochmanniella pennsylvanica (strain BPEN).